The following is a 146-amino-acid chain: MRLMGMDVGSRTVGISVSDQLGWTAQGVEIVPINEDEEIFGIERVKELVKEYDVVGFVLGLPKNMNNTEGPRVEAARNYGKLLEETFGLPIDFQDERLTTVEAERMLIEQADTSRSKRKKVIDKLAASLILENYLNGHGKLIDRLK.

The protein belongs to the YqgF nuclease family.

Its subcellular location is the cytoplasm. Functionally, could be a nuclease involved in processing of the 5'-end of pre-16S rRNA. The chain is Putative pre-16S rRNA nuclease from Pediococcus pentosaceus (strain ATCC 25745 / CCUG 21536 / LMG 10740 / 183-1w).